The primary structure comprises 239 residues: EF-hand domain-containing protein D1 (239 aa).

The span at Met1–Glu18 shows a compositional bias: basic and acidic residues. Positions Met1 to Ala53 are disordered. EF-hand domains are found at residues Arg90–Pro125 and Gln126–Gly161. Ca(2+) is bound by residues Asp103, Asp107, Glu114, Asp139, Asp141, Asp143, Lys145, and Glu150. At Ser201 the chain carries Phosphoserine.

The protein localises to the mitochondrion inner membrane. Acts as a calcium sensor for mitochondrial flash (mitoflash) activation, an event characterized by stochastic bursts of superoxide production. May play a role in neuronal differentiation. The sequence is that of EF-hand domain-containing protein D1 (EFHD1) from Homo sapiens (Human).